The primary structure comprises 151 residues: Large ribosomal subunit protein eL8 (151 aa).

The protein belongs to the eukaryotic ribosomal protein eL8 family. Part of the 50S ribosomal subunit. Probably part of the RNase P complex.

The protein resides in the cytoplasm. Functionally, multifunctional RNA-binding protein that recognizes the K-turn motif in ribosomal RNA, the RNA component of RNase P, box H/ACA, box C/D and box C'/D' sRNAs. This chain is Large ribosomal subunit protein eL8, found in Pyrobaculum neutrophilum (strain DSM 2338 / JCM 9278 / NBRC 100436 / V24Sta) (Thermoproteus neutrophilus).